The primary structure comprises 113 residues: MESSAKLSLARLSPRKTRTVADLVRGKGIQQALNTLSFLPNPSAQILLKLLKSAVANAEQKGVNDIDKLFVKTIFVDGGAVLKRFVPRAMGRASKIRKPTSHISVVLSDTKTR.

This sequence belongs to the universal ribosomal protein uL22 family. Part of the 50S ribosomal subunit.

Its function is as follows. This protein binds specifically to 23S rRNA; its binding is stimulated by other ribosomal proteins, e.g. L4, L17, and L20. It is important during the early stages of 50S assembly. It makes multiple contacts with different domains of the 23S rRNA in the assembled 50S subunit and ribosome. Functionally, the globular domain of the protein is located near the polypeptide exit tunnel on the outside of the subunit, while an extended beta-hairpin is found that lines the wall of the exit tunnel in the center of the 70S ribosome. The sequence is that of Large ribosomal subunit protein uL22 from Trichlorobacter lovleyi (strain ATCC BAA-1151 / DSM 17278 / SZ) (Geobacter lovleyi).